A 369-amino-acid polypeptide reads, in one-letter code: Phospho-N-acetylmuramoyl-pentapeptide-transferase (369 aa).

Transmembrane regions (helical) follow at residues 3–23 (ALLF…PLFI), 53–73 (GGIV…LLTW), 81–101 (VTPS…VGFL), 118–138 (WQKI…AITL), 162–182 (FMAL…CLIV), 198–218 (LAAG…FWQF), 240–260 (PLDL…FLWW), 267–287 (IFMG…LAIL), 290–310 (TELL…SVVL), and 347–367 (FWII…LEWI).

It belongs to the glycosyltransferase 4 family. MraY subfamily. Mg(2+) serves as cofactor.

Its subcellular location is the cell membrane. It catalyses the reaction UDP-N-acetyl-alpha-D-muramoyl-L-alanyl-gamma-D-glutamyl-meso-2,6-diaminopimeloyl-D-alanyl-D-alanine + di-trans,octa-cis-undecaprenyl phosphate = di-trans,octa-cis-undecaprenyl diphospho-N-acetyl-alpha-D-muramoyl-L-alanyl-D-glutamyl-meso-2,6-diaminopimeloyl-D-alanyl-D-alanine + UMP. The protein operates within cell wall biogenesis; peptidoglycan biosynthesis. Its function is as follows. Catalyzes the initial step of the lipid cycle reactions in the biosynthesis of the cell wall peptidoglycan: transfers peptidoglycan precursor phospho-MurNAc-pentapeptide from UDP-MurNAc-pentapeptide onto the lipid carrier undecaprenyl phosphate, yielding undecaprenyl-pyrophosphoryl-MurNAc-pentapeptide, known as lipid I. This Clavibacter michiganensis subsp. michiganensis (strain NCPPB 382) protein is Phospho-N-acetylmuramoyl-pentapeptide-transferase.